Reading from the N-terminus, the 60-residue chain is Sec-independent protein translocase protein TatA (60 aa).

Residues 1–21 traverse the membrane as a helical segment; sequence MLSNIGVPGLILILVIALVIF.

It belongs to the TatA/E family. In terms of assembly, forms a complex with TatC.

The protein resides in the cell membrane. Part of the twin-arginine translocation (Tat) system that transports large folded proteins containing a characteristic twin-arginine motif in their signal peptide across membranes. TatA could form the protein-conducting channel of the Tat system. The polypeptide is Sec-independent protein translocase protein TatA (Anoxybacillus flavithermus (strain DSM 21510 / WK1)).